The chain runs to 200 residues: Large ribosomal subunit protein uL4 (200 aa).

The interval Gln45–Thr64 is disordered.

Belongs to the universal ribosomal protein uL4 family. As to quaternary structure, part of the 50S ribosomal subunit.

Functionally, one of the primary rRNA binding proteins, this protein initially binds near the 5'-end of the 23S rRNA. It is important during the early stages of 50S assembly. It makes multiple contacts with different domains of the 23S rRNA in the assembled 50S subunit and ribosome. Its function is as follows. Forms part of the polypeptide exit tunnel. The sequence is that of Large ribosomal subunit protein uL4 from Psychrobacter cryohalolentis (strain ATCC BAA-1226 / DSM 17306 / VKM B-2378 / K5).